A 177-amino-acid chain; its full sequence is Large ribosomal subunit protein uL6 (177 aa).

Belongs to the universal ribosomal protein uL6 family. In terms of assembly, part of the 50S ribosomal subunit.

Functionally, this protein binds to the 23S rRNA, and is important in its secondary structure. It is located near the subunit interface in the base of the L7/L12 stalk, and near the tRNA binding site of the peptidyltransferase center. The polypeptide is Large ribosomal subunit protein uL6 (Neisseria gonorrhoeae (strain ATCC 700825 / FA 1090)).